A 219-amino-acid polypeptide reads, in one-letter code: MFKPYNLEQGKFLVRLARRAVEEFIRSKRIIKPPEDTPSRLLEDNYGVFTTIETIREDGSTELRGCIGFPRGNVNTVKATINSALAAAFDDPRFAPLDVNELESVIFEVSVLSPLEEAKFNSPKELVNLVKVGVHGLVIERGMYSGLLLPQVPVEYCWDTVMFLDEACEKAYLRPECWAEKGTRVYTYEAQIFREKGPRGDVYERDLIEELKKCHLDEA.

The region spanning 8 to 204 (EQGKFLVRLA…EKGPRGDVYE (197 aa)) is the AMMECR1 domain.

In Caldivirga maquilingensis (strain ATCC 700844 / DSM 13496 / JCM 10307 / IC-167), this protein is Protein Cmaq_0360.